The chain runs to 344 residues: MSYALLRPFLFNLDPEHAHELTLQLLEKAHKARALGFIYSQQSLPTECMGLQFSNPVGLAAGLDKNGQYIDALAELGFGFIEVGTVTPRPQQGNEKPRLFRIKEADAIINRMGFNNLGVDRLIQNVQRAKYKGNIGINIGKNAVTPVENAADDYIYCLDRVYPHASYITVNISSPNTKNLRDLQSGEALTELLDSIKNRHSQLATEYGFYVPMVLKVAPDLTPEQVDYIANQLIEFDIDGLIATNTTLSRTGVEDLPFGDEAGGLSGRPVGHLSTQIIEQFYERLEGKVPIIGVGGIDSGDKAVRKLNAGATMIQLYSGMIYQGPKLVQQCVEAITSHRDAMML.

FMN is bound by residues 61 to 65 and Thr85; that span reads AGLDK. Lys65 contributes to the substrate binding site. 110-114 serves as a coordination point for substrate; that stretch reads NRMGF. Residues Asn138 and Asn171 each coordinate FMN. Asn171 provides a ligand contact to substrate. Ser174 functions as the Nucleophile in the catalytic mechanism. Asn176 contributes to the substrate binding site. Positions 216 and 244 each coordinate FMN. Substrate is bound at residue 245–246; sequence NT. Residues Gly267, Gly296, and 317 to 318 each bind FMN; that span reads YS.

Belongs to the dihydroorotate dehydrogenase family. Type 2 subfamily. Monomer. FMN serves as cofactor.

Its subcellular location is the cell membrane. The catalysed reaction is (S)-dihydroorotate + a quinone = orotate + a quinol. Its pathway is pyrimidine metabolism; UMP biosynthesis via de novo pathway; orotate from (S)-dihydroorotate (quinone route): step 1/1. Catalyzes the conversion of dihydroorotate to orotate with quinone as electron acceptor. The chain is Dihydroorotate dehydrogenase (quinone) from Psychrobacter sp. (strain PRwf-1).